Consider the following 311-residue polypeptide: Olfactory receptor 2M4 (311 aa).

Residues 1 to 25 (MVWENQTFNSIFILLGIFNHSPTHT) lie on the Extracellular side of the membrane. An N-linked (GlcNAc...) asparagine glycan is attached at N5. A helical membrane pass occupies residues 26–49 (FLFSLVLGIFSLALMENISMVLLI). Residues 50–57 (YIEKQLHT) lie on the Cytoplasmic side of the membrane. A helical membrane pass occupies residues 58–79 (PMYFLLSQLSLMDLMLICTTLP). At 80-100 (KMIFSYLSGKKSISLAGCGTQ) the chain is on the extracellular side. C97 and C189 are oxidised to a cystine. Residues 101-120 (IFFYVSLLGAECFLLAVMAY) traverse the membrane as a helical segment. Over 121–139 (DRYVAICHPLQYTILMNPK) the chain is Cytoplasmic. The helical transmembrane segment at 140 to 158 (LCVFMTVASWTLGSLDGII) threads the bilayer. At 159–195 (VLAAVLSFSYCSSLEIHHFFCDVAALLPLSCTETSAF) the chain is on the extracellular side. Residues 196-219 (ERLLVICCVVMLIFPVSVIILSYS) traverse the membrane as a helical segment. Residues 220–236 (HVLRAVIHMGSGESRRK) are Cytoplasmic-facing. Residues 237 to 259 (AFTTCSSHLSVVGLYYGAAMFMY) form a helical membrane-spanning segment. Topologically, residues 260–272 (MRPASKHTPDQDK) are extracellular. Residues 273-292 (MVSAFYTILTPMLNPLIYSL) form a helical membrane-spanning segment. The Cytoplasmic portion of the chain corresponds to 293 to 311 (RNKEVFRALQKVLKKRKLI).

This sequence belongs to the G-protein coupled receptor 1 family.

The protein resides in the cell membrane. Functionally, odorant receptor. This Homo sapiens (Human) protein is Olfactory receptor 2M4 (OR2M4).